A 286-amino-acid polypeptide reads, in one-letter code: ATP synthase gamma chain (286 aa).

This sequence belongs to the ATPase gamma chain family. In terms of assembly, F-type ATPases have 2 components, CF(1) - the catalytic core - and CF(0) - the membrane proton channel. CF(1) has five subunits: alpha(3), beta(3), gamma(1), delta(1), epsilon(1). CF(0) has three main subunits: a, b and c.

The protein resides in the cell inner membrane. Functionally, produces ATP from ADP in the presence of a proton gradient across the membrane. The gamma chain is believed to be important in regulating ATPase activity and the flow of protons through the CF(0) complex. This Shewanella loihica (strain ATCC BAA-1088 / PV-4) protein is ATP synthase gamma chain.